The primary structure comprises 100 residues: Small ribosomal subunit protein bS18c (100 aa).

A compositionally biased stretch (basic residues) spans 1–19; that stretch reads MDKSKRPFRKSKRSFRRRL. The disordered stretch occupies residues 1–23; that stretch reads MDKSKRPFRKSKRSFRRRLPPIG.

This sequence belongs to the bacterial ribosomal protein bS18 family. As to quaternary structure, part of the 30S ribosomal subunit.

The protein resides in the plastid. Its subcellular location is the chloroplast. The chain is Small ribosomal subunit protein bS18c from Calycanthus floridus var. glaucus (Eastern sweetshrub).